The primary structure comprises 207 residues: Large ribosomal subunit protein uL4 (207 aa).

Positions 50–76 (KTKTVSEVSGTTKKPFKQKGTGNARQG) are disordered.

This sequence belongs to the universal ribosomal protein uL4 family. As to quaternary structure, part of the 50S ribosomal subunit.

Its function is as follows. One of the primary rRNA binding proteins, this protein initially binds near the 5'-end of the 23S rRNA. It is important during the early stages of 50S assembly. It makes multiple contacts with different domains of the 23S rRNA in the assembled 50S subunit and ribosome. Functionally, forms part of the polypeptide exit tunnel. The chain is Large ribosomal subunit protein uL4 from Rickettsia canadensis (strain McKiel).